Reading from the N-terminus, the 642-residue chain is Bifunctional protein glk (642 aa).

The segment at M1–S340 is glucokinase. A23–T28 provides a ligand contact to ATP. Residues S341 to T417 enclose the HTH rpiR-type domain. The interval S341–D642 is putative HTH-type transcriptional regulator. Residues I377–R396 constitute a DNA-binding region (H-T-H motif). Residues A461–S600 enclose the SIS domain. The chain crosses the membrane as a helical span at residues S576 to I596.

In the N-terminal section; belongs to the bacterial glucokinase family.

The protein localises to the membrane. The catalysed reaction is D-glucose + ATP = D-glucose 6-phosphate + ADP + H(+). This chain is Bifunctional protein glk (glk), found in Burkholderia lata (strain ATCC 17760 / DSM 23089 / LMG 22485 / NCIMB 9086 / R18194 / 383).